The chain runs to 457 residues: Cyanidin 3-O-galactoside 2''-O-xylosyltransferase FGGT1 (457 aa).

It belongs to the UDP-glycosyltransferase family. Expressed in ovaries.

The enzyme catalyses cyanidin 3-O-beta-D-galactoside + UDP-alpha-D-xylose = cyanidin 3-O-[beta-D-xylosyl-(1-&gt;2)-beta-D-galactoside] + UDP + H(+). Its pathway is pigment biosynthesis; anthocyanin biosynthesis. Functionally, xylosyltransferase involved in anthocyanin biosynthesis by catalyzing the xylosylation of cyanidin 3-O-galactoside to form cyanidin 3-O-[2-O-(-xylosyl)-galactoside]. Required for the accumulation of anthocyanin in red-fleshed kiwifruit varieties. In Actinidia chinensis var. chinensis (Chinese soft-hair kiwi), this protein is Cyanidin 3-O-galactoside 2''-O-xylosyltransferase FGGT1.